The following is a 131-amino-acid chain: Phosphoribosyl-AMP cyclohydrolase (131 aa).

Aspartate 78 contributes to the Mg(2+) binding site. Cysteine 79 lines the Zn(2+) pocket. Mg(2+)-binding residues include aspartate 80 and aspartate 82. Zn(2+) contacts are provided by cysteine 96 and cysteine 103.

This sequence belongs to the PRA-CH family. As to quaternary structure, homodimer. Mg(2+) is required as a cofactor. Requires Zn(2+) as cofactor.

The protein localises to the cytoplasm. It catalyses the reaction 1-(5-phospho-beta-D-ribosyl)-5'-AMP + H2O = 1-(5-phospho-beta-D-ribosyl)-5-[(5-phospho-beta-D-ribosylamino)methylideneamino]imidazole-4-carboxamide. The protein operates within amino-acid biosynthesis; L-histidine biosynthesis; L-histidine from 5-phospho-alpha-D-ribose 1-diphosphate: step 3/9. Catalyzes the hydrolysis of the adenine ring of phosphoribosyl-AMP. The sequence is that of Phosphoribosyl-AMP cyclohydrolase from Neisseria meningitidis serogroup C / serotype 2a (strain ATCC 700532 / DSM 15464 / FAM18).